A 623-amino-acid polypeptide reads, in one-letter code: UvrABC system protein C (623 aa).

One can recognise a GIY-YIG domain in the interval 28–105; it reads GAPGVYRMLD…IKQLKPKYNV (78 aa). Residues 215 to 250 form the UVR domain; it reads TRVQEELAEQMMAASEAMEFERAAALRDRIRALTTV.

It belongs to the UvrC family. As to quaternary structure, interacts with UvrB in an incision complex.

It localises to the cytoplasm. Its function is as follows. The UvrABC repair system catalyzes the recognition and processing of DNA lesions. UvrC both incises the 5' and 3' sides of the lesion. The N-terminal half is responsible for the 3' incision and the C-terminal half is responsible for the 5' incision. The protein is UvrABC system protein C of Ruegeria pomeroyi (strain ATCC 700808 / DSM 15171 / DSS-3) (Silicibacter pomeroyi).